A 187-amino-acid chain; its full sequence is GTP cyclohydrolase 1 (187 aa).

The Zn(2+) site is built by cysteine 74, histidine 77, and cysteine 145.

Belongs to the GTP cyclohydrolase I family. Homomer.

It carries out the reaction GTP + H2O = 7,8-dihydroneopterin 3'-triphosphate + formate + H(+). Its pathway is cofactor biosynthesis; 7,8-dihydroneopterin triphosphate biosynthesis; 7,8-dihydroneopterin triphosphate from GTP: step 1/1. This Sulfurihydrogenibium sp. (strain YO3AOP1) protein is GTP cyclohydrolase 1.